Reading from the N-terminus, the 735-residue chain is Ribosomal protein S6 kinase alpha-1 (735 aa).

Serine 54 carries the post-translational modification Phosphoserine. The Protein kinase 1 domain maps to 62 to 321; it reads FELLKVLGQG…AEEIKRHIFY (260 aa). ATP-binding positions include 68 to 76 and lysine 94; that span reads LGQGSFGKV. Aspartate 187 acts as the Proton acceptor in catalysis. Phosphoserine; by PDPK1 is present on serine 221. Phosphoserine is present on serine 307. The 70-residue stretch at 322–391 folds into the AGC-kinase C-terminal domain; it reads STIDWNKLYR…VATGLMEDDS (70 aa). A Phosphothreonine modification is found at threonine 359. Serine 363 carries the phosphoserine modification. Phosphoserine; by autocatalysis occurs at positions 369 and 380. Residues 418–675 enclose the Protein kinase 2 domain; the sequence is YIVKETIGVG…AKQVLQHPWI (258 aa). Residues 424–432 and lysine 447 contribute to the ATP site; that span reads IGVGSYSVC. The active-site Proton acceptor is the aspartate 535. Threonine 573 is modified (phosphothreonine). Phosphoserine is present on serine 732.

The protein belongs to the protein kinase superfamily. AGC Ser/Thr protein kinase family. S6 kinase subfamily. As to quaternary structure, forms a complex with either MAPK1/ERK2 or MAPK3/ERK1 in quiescent cells. Transiently dissociates following mitogenic stimulation. Interacts with ETV1/ER81 and FGFR1. Mg(2+) serves as cofactor. Activated by phosphorylation at Ser-221 by PDPK1. Autophosphorylated on Ser-380, as part of the activation process. May be phosphorylated at Thr-359 and Ser-363 by MAPK1/ERK2 and MAPK3/ERK1. Post-translationally, N-terminal myristoylation results in an activated kinase in the absence of added growth factors.

It localises to the nucleus. Its subcellular location is the cytoplasm. The catalysed reaction is L-seryl-[protein] + ATP = O-phospho-L-seryl-[protein] + ADP + H(+). The enzyme catalyses L-threonyl-[protein] + ATP = O-phospho-L-threonyl-[protein] + ADP + H(+). With respect to regulation, upon extracellular signal or mitogen stimulation, phosphorylated at Thr-573 in the C-terminal kinase domain (CTKD) by MAPK1/ERK2 and MAPK3/ERK1. The activated CTKD then autophosphorylates Ser-380, allowing binding of PDPK1, which in turn phosphorylates Ser-221 in the N-terminal kinase domain (NTDK) leading to the full activation of the protein and subsequent phosphorylation of the substrates by the NTKD. In terms of biological role, serine/threonine-protein kinase that acts downstream of ERK (MAPK1/ERK2 and MAPK3/ERK1) signaling and mediates mitogenic and stress-induced activation of the transcription factors CREB1, ETV1/ER81 and NR4A1/NUR77, regulates translation through RPS6 and EIF4B phosphorylation, and mediates cellular proliferation, survival, and differentiation by modulating mTOR signaling and repressing pro-apoptotic function of BAD and DAPK1. In fibroblast, is required for EGF-stimulated phosphorylation of CREB1, which results in the subsequent transcriptional activation of several immediate-early genes. In response to mitogenic stimulation (EGF and PMA), phosphorylates and activates NR4A1/NUR77 and ETV1/ER81 transcription factors and the cofactor CREBBP. Upon insulin-derived signal, acts indirectly on the transcription regulation of several genes by phosphorylating GSK3B at 'Ser-9' and inhibiting its activity. Phosphorylates RPS6 in response to serum or EGF via an mTOR-independent mechanism and promotes translation initiation by facilitating assembly of the pre-initiation complex. In response to insulin, phosphorylates EIF4B, enhancing EIF4B affinity for the EIF3 complex and stimulating cap-dependent translation. Is involved in the mTOR nutrient-sensing pathway by directly phosphorylating TSC2 at 'Ser-1798', which potently inhibits TSC2 ability to suppress mTOR signaling, and mediates phosphorylation of RPTOR, which regulates mTORC1 activity and may promote rapamycin-sensitive signaling independently of the PI3K/AKT pathway. Also involved in feedback regulation of mTORC1 and mTORC2 by phosphorylating DEPTOR. Mediates cell survival by phosphorylating the pro-apoptotic proteins BAD and DAPK1 and suppressing their pro-apoptotic function. Promotes the survival of hepatic stellate cells by phosphorylating CEBPB in response to the hepatotoxin carbon tetrachloride (CCl4). Mediates induction of hepatocyte prolifration by TGFA through phosphorylation of CEBPB. Is involved in cell cycle regulation by phosphorylating the CDK inhibitor CDKN1B, which promotes CDKN1B association with 14-3-3 proteins and prevents its translocation to the nucleus and inhibition of G1 progression. Phosphorylates EPHA2 at 'Ser-897', the RPS6KA-EPHA2 signaling pathway controls cell migration. In response to mTORC1 activation, phosphorylates EIF4B at 'Ser-406' and 'Ser-422' which stimulates bicarbonate cotransporter SLC4A7 mRNA translation, increasing SLC4A7 protein abundance and function. In Rattus norvegicus (Rat), this protein is Ribosomal protein S6 kinase alpha-1 (Rps6ka1).